We begin with the raw amino-acid sequence, 132 residues long: Small ribosomal subunit protein uS11 (132 aa).

The disordered stretch occupies residues 1–24 (MAAPKQAARKPRRRDRKSVPVGQA). Residues 7 to 16 (AARKPRRRDR) are compositionally biased toward basic residues.

It belongs to the universal ribosomal protein uS11 family. Part of the 30S ribosomal subunit. Interacts with proteins S7 and S18. Binds to IF-3.

Its function is as follows. Located on the platform of the 30S subunit, it bridges several disparate RNA helices of the 16S rRNA. Forms part of the Shine-Dalgarno cleft in the 70S ribosome. This Bifidobacterium longum (strain DJO10A) protein is Small ribosomal subunit protein uS11.